Reading from the N-terminus, the 196-residue chain is Interleukin-23 subunit alpha (196 aa).

Positions 1-21 (MLDCRAVIMLWLLPWVTQGLA) are cleaved as a signal peptide.

This sequence belongs to the IL-6 superfamily. In terms of assembly, heterodimer with IL12B; disulfide-linked. The heterodimer is known as interleukin IL-23. Interacts with IL23R; this interaction enables recruitment of IL12RB1. As to expression, secreted by activated dendritic cells (at protein level). Detected in various tissues with higher expression in polarized Th1 cells and activated macrophages.

The protein localises to the secreted. Its function is as follows. Associates with IL12B to form the IL-23 interleukin, a heterodimeric cytokine which functions in innate and adaptive immunity. IL-23 may constitute with IL-17 an acute response to infection in peripheral tissues. IL-23 binds to a heterodimeric receptor complex composed of IL12RB1 and IL23R, activates the Jak-Stat signaling cascade, stimulates memory rather than naive T-cells and promotes production of pro-inflammatory cytokines. IL-23 induces autoimmune inflammation and thus may be responsible for autoimmune inflammatory diseases and may be important for tumorigenesis. Functionally, associates with IL12B to form the pro-inflammatory cytokine IL-23 that plays different roles in innate and adaptive immunity. Released by antigen-presenting cells such as dendritic cells or macrophages, binds to a heterodimeric receptor complex composed of IL12RB1 and IL23R to activate JAK2 and TYK2 which then phosphorylate the receptor to form a docking site leading to the phosphorylation of STAT3 and STAT4. This process leads to activation of several pathways including p38 MAPK or NF-kappa-B and promotes the production of pro-inflammatory cytokines such as interleukin-17A/IL17A. In turn, participates in the early and effective intracellular bacterial clearance. Promotes the expansion and survival of T-helper 17 cells, a CD4-positive helper T-cell subset that produces IL-17, as well as other IL-17-producing cells. This Mus musculus (Mouse) protein is Interleukin-23 subunit alpha (Il23a).